The chain runs to 430 residues: Enolase (430 aa).

(2R)-2-phosphoglycerate is bound at residue glutamine 162. Residue glutamate 204 is the Proton donor of the active site. Aspartate 242, glutamate 289, and aspartate 316 together coordinate Mg(2+). (2R)-2-phosphoglycerate-binding residues include lysine 341, arginine 370, serine 371, and lysine 392. Catalysis depends on lysine 341, which acts as the Proton acceptor.

This sequence belongs to the enolase family. Requires Mg(2+) as cofactor.

Its subcellular location is the cytoplasm. The protein localises to the secreted. The protein resides in the cell surface. It carries out the reaction (2R)-2-phosphoglycerate = phosphoenolpyruvate + H2O. The protein operates within carbohydrate degradation; glycolysis; pyruvate from D-glyceraldehyde 3-phosphate: step 4/5. In terms of biological role, catalyzes the reversible conversion of 2-phosphoglycerate (2-PG) into phosphoenolpyruvate (PEP). It is essential for the degradation of carbohydrates via glycolysis. This is Enolase from Flavobacterium johnsoniae (strain ATCC 17061 / DSM 2064 / JCM 8514 / BCRC 14874 / CCUG 350202 / NBRC 14942 / NCIMB 11054 / UW101) (Cytophaga johnsonae).